Reading from the N-terminus, the 279-residue chain is MLMKIKTSIHPSSVVEEGAQIGEGVRIGPFCHISADAVIGDGVELVSHVSVMGATTIGASTKVYPMATLGAPPQNTKHKGGRTTLVIGANCTIREGVTMHVGTDTSRGETTVGDNGNFLAYAHIAHDCVVGKNATFANGATLGGHCEIGDNVYIGGLSAVHQFVRVGDNAFLGGCSAFVGDVIPYAIAVGNRASLRGLNIIGLKRAGLPRSEIYLLRKAYRTIFDRSRTVGENIEFAKAEFASSPTAMKIIDFISSRGKRHYAVPSLKGGDGDDTDDED.

The protein belongs to the transferase hexapeptide repeat family. LpxA subfamily. Homotrimer.

It is found in the cytoplasm. It catalyses the reaction a (3R)-hydroxyacyl-[ACP] + UDP-N-acetyl-alpha-D-glucosamine = a UDP-3-O-[(3R)-3-hydroxyacyl]-N-acetyl-alpha-D-glucosamine + holo-[ACP]. The protein operates within glycolipid biosynthesis; lipid IV(A) biosynthesis; lipid IV(A) from (3R)-3-hydroxytetradecanoyl-[acyl-carrier-protein] and UDP-N-acetyl-alpha-D-glucosamine: step 1/6. In terms of biological role, involved in the biosynthesis of lipid A, a phosphorylated glycolipid that anchors the lipopolysaccharide to the outer membrane of the cell. The protein is Acyl-[acyl-carrier-protein]--UDP-N-acetylglucosamine O-acyltransferase of Mesorhizobium japonicum (strain LMG 29417 / CECT 9101 / MAFF 303099) (Mesorhizobium loti (strain MAFF 303099)).